Consider the following 451-residue polypeptide: tRNA-2-methylthio-N(6)-dimethylallyladenosine synthase (451 aa).

An MTTase N-terminal domain is found at 10 to 128 (KKFYTLTFGC…FPQLLEHVMQ (119 aa)). [4Fe-4S] cluster-binding residues include C19, C55, C89, C165, C169, and C172. Residues 151–381 (REDSIKAWVV…ISVQQEISEQ (231 aa)) form the Radical SAM core domain. Residues 384-447 (KDLENTVQRI…SWNLYGEIFE (64 aa)) enclose the TRAM domain.

Belongs to the methylthiotransferase family. MiaB subfamily. Monomer. The cofactor is [4Fe-4S] cluster.

The protein resides in the cytoplasm. The enzyme catalyses N(6)-dimethylallyladenosine(37) in tRNA + (sulfur carrier)-SH + AH2 + 2 S-adenosyl-L-methionine = 2-methylsulfanyl-N(6)-dimethylallyladenosine(37) in tRNA + (sulfur carrier)-H + 5'-deoxyadenosine + L-methionine + A + S-adenosyl-L-homocysteine + 2 H(+). Catalyzes the methylthiolation of N6-(dimethylallyl)adenosine (i(6)A), leading to the formation of 2-methylthio-N6-(dimethylallyl)adenosine (ms(2)i(6)A) at position 37 in tRNAs that read codons beginning with uridine. The protein is tRNA-2-methylthio-N(6)-dimethylallyladenosine synthase of Natranaerobius thermophilus (strain ATCC BAA-1301 / DSM 18059 / JW/NM-WN-LF).